The primary structure comprises 891 residues: Metabotropic glutamate receptor-like protein N (891 aa).

Residues M1–Y399 lie on the Extracellular side of the membrane. N52, N85, N88, N125, N132, N224, N298, N312, N320, N325, N353, N363, and N375 each carry an N-linked (GlcNAc...) asparagine glycan. A disordered region spans residues N52–N91. The chain crosses the membrane as a helical span at residues G400–I420. Residues K421–P433 lie on the Cytoplasmic side of the membrane. A helical membrane pass occupies residues T434–V454. Over S455–T461 the chain is Extracellular. Residues C462–V482 form a helical membrane-spanning segment. Residues K483–Q505 lie on the Cytoplasmic side of the membrane. The helical transmembrane segment at L506 to G526 threads the bilayer. Topologically, residues L527–G555 are extracellular. Residues L556–V576 form a helical membrane-spanning segment. The Cytoplasmic segment spans residues S577–K592. Residues S593–I613 form a helical membrane-spanning segment. Residues S614–S625 lie on the Extracellular side of the membrane. The helical transmembrane segment at G626–L646 threads the bilayer. The Cytoplasmic segment spans residues K647–Q891. Disordered stretches follow at residues Q660–S689, N742–P827, and D869–Q891. Polar residues predominate over residues N742 to Q767. Low complexity predominate over residues P772–N782. Residues D783–R820 show a composition bias toward polar residues. The segment covering I872–S881 has biased composition (acidic residues). Residues S882–Q891 are compositionally biased toward low complexity.

The protein belongs to the G-protein coupled receptor 3 family. GABA-B receptor subfamily.

The protein localises to the membrane. This Dictyostelium discoideum (Social amoeba) protein is Metabotropic glutamate receptor-like protein N (grlN).